We begin with the raw amino-acid sequence, 376 residues long: 23S rRNA (uracil(747)-C(5))-methyltransferase RlmC (376 aa).

The [4Fe-4S] cluster site is built by cysteine 3, cysteine 11, cysteine 14, and cysteine 87. S-adenosyl-L-methionine contacts are provided by glutamine 212, phenylalanine 241, glutamate 262, and asparagine 307. The active-site Nucleophile is cysteine 334.

This sequence belongs to the class I-like SAM-binding methyltransferase superfamily. RNA M5U methyltransferase family. RlmC subfamily.

It catalyses the reaction uridine(747) in 23S rRNA + S-adenosyl-L-methionine = 5-methyluridine(747) in 23S rRNA + S-adenosyl-L-homocysteine + H(+). In terms of biological role, catalyzes the formation of 5-methyl-uridine at position 747 (m5U747) in 23S rRNA. The chain is 23S rRNA (uracil(747)-C(5))-methyltransferase RlmC from Yersinia pseudotuberculosis serotype O:1b (strain IP 31758).